The following is a 327-amino-acid chain: Small ribosomal subunit protein RACK1z (327 aa).

7 WD repeats span residues 13–44 (AHTDMVTAIATPIDNADIIVSASRDKSIILWK), 61–91 (GHSHFVEDVVLSSDGQFALSGSWDGELRLWD), 103–133 (GHTKDVLSVAFSLDNRQIVSASRDRTIKLWN), 148–180 (GHRDWVSCVRFSPNTLQPTIVSASWDKTVKVWN), 192–222 (GHTGYVSTVAVSPDGSLCASGGKDGVVLLWD), 233–262 (EANSVIHALCFSPNRYWLCAATEHGIKIWD), and 293–323 (RKVIYCTSLNWSADGSTLFSGYTDGVIRVWG).

This sequence belongs to the WD repeat G protein beta family. Ribosomal protein RACK1 subfamily. As to quaternary structure, homodimer and heterodimer with RACK1B or RACK1C. Interacts with NUDT7. Interacts with GB1, MEKK1, MKK4, MKK5, MPK3 and MPK6, but not with GPA1 or MPK4. Interacts with OFUT20. Widely expressed.

It is found in the cytoplasm. The protein resides in the nucleus. In terms of biological role, major component of the RACK1 regulatory proteins that play a role in multiple signal transduction pathways. Involved in multiple hormone responses and developmental processes. MAPK cascade scaffolding protein involved in the protease IV and ArgC signaling pathway but not the flg22 pathway. The protein is Small ribosomal subunit protein RACK1z of Arabidopsis thaliana (Mouse-ear cress).